A 402-amino-acid chain; its full sequence is Argininosuccinate synthase (402 aa).

Residues Ala-11–Ser-19 and Ala-39 contribute to the ATP site. Residues Tyr-90 and Ser-95 each coordinate L-citrulline. ATP is bound at residue Gly-120. Thr-122, Asn-126, and Asp-127 together coordinate L-aspartate. Asn-126 contacts L-citrulline. 5 residues coordinate L-citrulline: Arg-130, Ser-179, Ser-188, Glu-264, and Tyr-276.

The protein belongs to the argininosuccinate synthase family. Type 1 subfamily. In terms of assembly, homotetramer.

It localises to the cytoplasm. It carries out the reaction L-citrulline + L-aspartate + ATP = 2-(N(omega)-L-arginino)succinate + AMP + diphosphate + H(+). It participates in amino-acid biosynthesis; L-arginine biosynthesis; L-arginine from L-ornithine and carbamoyl phosphate: step 2/3. The chain is Argininosuccinate synthase from Roseiflexus castenholzii (strain DSM 13941 / HLO8).